A 427-amino-acid chain; its full sequence is Homoserine O-acetyltransferase FUB5 (427 aa).

Over residues 1 to 13 (MTTTTTAPALPTP) the composition is skewed to low complexity. The tract at residues 1–35 (MTTTTTAPALPTPIHDGLGNGTTYERSIPRPVNPF) is disordered. The region spanning 77–400 (NVMIICHALS…VSDDGHDAFL (324 aa)) is the AB hydrolase-1 domain. Serine 175 (nucleophile) is an active-site residue. The tract at residues 260-297 (RFGRDTGNKKKAKNKGSETLPSNSTPIHSQGGADETPV) is disordered. The segment covering 276 to 287 (SETLPSNSTPIH) has biased composition (polar residues). Active-site residues include aspartate 367 and histidine 396.

It belongs to the AB hydrolase superfamily. MetX family.

It carries out the reaction L-homoserine + acetyl-CoA = O-acetyl-L-homoserine + CoA. The protein operates within mycotoxin biosynthesis. Functionally, homoserine O-acetyltransferase; part of the gene cluster that mediates the biosynthesis of fusaric acid, a mycotoxin with low to moderate toxicity to animals and humans, but with high phytotoxic properties. L-aspartate is suggested as fusaric acid amino acid precursor that is activated and further processed to O-acetyl-L-homoserine by cluster enzymes aspartate kinase FUB3 and homoserine O-acetyltransferase FUB5, as well as enzymes of the primary metabolism. The polyketide synthase (PKS) FUB1 generates the triketide trans-2-hexenal which is presumptively released by the hydrolase FUB4 and linked to the NRPS-bound amino acid precursor by NAD(P)-dependent dehydrogenase FUB6. FUB1, FUB4, and the non-canonical NRPS Fub8 may form an enzyme complex. Further processing of the NRPS-bound intermediate might be carried out by FUB6 and the sulfhydrylase FUB7, enabling a spontaneous electrocyclization to close the carbon backbone of fusaric acid. Dihydrofusaric acid is likely to be released via reduction by the thioester reductase (TR) domain of FUB8 whereupon the final oxidation to fusaric acid may (also) be performed by the FMN-dependent dehydrogenase FUB9. The sequence is that of Homoserine O-acetyltransferase FUB5 from Gibberella fujikuroi (strain CBS 195.34 / IMI 58289 / NRRL A-6831) (Bakanae and foot rot disease fungus).